We begin with the raw amino-acid sequence, 80 residues long: Consomatin Mrc1 (80 aa).

Residues 1–22 form the signal peptide; that stretch reads MQTAYWVMVMMMVWITAPLSEG. The propeptide occupies 23–57; the sequence is GKLNDVIRGLVPDDVTPQLILRSLISRRPSDSVVR. A disulfide bridge connects residues Cys63 and Cys68. D-tryptophan is present on Trp65. 4 positions are modified to 4-hydroxyproline: Pro69, Pro70, Pro71, and Pro72. The propeptide occupies 74–80; sequence RRPNGKG.

This sequence belongs to the conotoxin C superfamily. Consomatin family. In terms of tissue distribution, expressed by the venom duct.

The protein localises to the secreted. Its function is as follows. Moderately activates human somatostatin receptors (SSTR) with a preferential activation of SSTR1 and SSTR4. In vivo, does not cause behavioral changes in mice within a few minutes of intracranial injection, but causes a progressive loss of movement thereafter. Four to five hours after injection, mice recover, even with the highest dose tested. Shows antinociception and antihyperalgesia activities in two mouse models of acute pain, most probably by acting outside the central nervous system. This is Consomatin Mrc1 from Conus mercator (Trader cone).